A 257-amino-acid chain; its full sequence is Transmembrane protein C257L (257 aa).

Helical transmembrane passes span 123–143 (LELLGYSPTPLIGGDLMFTAL) and 163–183 (IMIFFLIILLCVILGIFYVLV).

The protein belongs to the asfivirus C257R family.

The protein resides in the host membrane. The protein localises to the virion. The polypeptide is Transmembrane protein C257L (African swine fever virus (isolate Pig/Kenya/KEN-50/1950) (ASFV)).